The following is a 120-amino-acid chain: ATP-dependent Clp protease adapter protein ClpS (120 aa).

A disordered region spans residues 9–32 (LTFNQDHPAEHEDDSSGIAVQESK).

This sequence belongs to the ClpS family. Binds to the N-terminal domain of the chaperone ClpA.

Involved in the modulation of the specificity of the ClpAP-mediated ATP-dependent protein degradation. The protein is ATP-dependent Clp protease adapter protein ClpS of Ectopseudomonas mendocina (strain ymp) (Pseudomonas mendocina).